Here is a 969-residue protein sequence, read N- to C-terminus: Vacuolar membrane protease (969 aa).

Topologically, residues 1–12 are cytoplasmic; it reads MTRVNSIIGFRP. A helical membrane pass occupies residues 13-33; that stretch reads IPVTLLTVITYVSLFSALLFI. Over 34 to 381 the chain is Vacuolar; sequence DRQPPAVAKK…RAFSVLHLHT (348 aa). N-linked (GlcNAc...) asparagine glycosylation is present at asparagine 125. Residues histidine 166 and aspartate 178 each contribute to the Zn(2+) site. The active-site Proton acceptor is the glutamate 216. Positions 217, 242, and 315 each coordinate Zn(2+). The N-linked (GlcNAc...) asparagine glycan is linked to asparagine 355. A helical membrane pass occupies residues 382–402; it reads IFAFTITLIVVPFVVVLVAMW. Residues 403 to 438 lie on the Cytoplasmic side of the membrane; that stretch reads ALGHFDKLYFFSNTAYIPPPPEHSIASRTTQGWRGV. The chain crosses the membrane as a helical span at residues 439-459; that stretch reads LRFPVAFVAASAGVVGMAFLI. Residues 460 to 469 lie on the Vacuolar side of the membrane; it reads NKINPMVVYA. The chain crosses the membrane as a helical span at residues 470–490; it reads SQYTVWTCFLSTWWIIAWVIL. The Cytoplasmic segment spans residues 491–505; it reads RGADAVRPTALARGY. Residues 506-526 form a helical membrane-spanning segment; sequence GFLEQWLLWLVAMIGVAISIG. The Vacuolar segment spans residues 527-531; sequence KSHLG. A helical membrane pass occupies residues 532–552; it reads SGYWVLVFYSGFFTSAFISLL. The Cytoplasmic segment spans residues 553 to 662; it reads EMAALQKKSE…WSKDLPSWTW (110 aa). The disordered stretch occupies residues 571-629; that stretch reads DQAYPPEEHSQTGASGNISNRAANDDDDAGEHATEETPLFRGPNRPLSFAPHRNPRYDN. Over residues 581 to 592 the composition is skewed to polar residues; that stretch reads QTGASGNISNRA. A helical membrane pass occupies residues 663-683; sequence ILQFLATVPLQLVLAGSVALL. Residues 684–698 are Vacuolar-facing; it reads LGNALAQTGADGSDM. The helical transmembrane segment at 699–719 threads the bilayer; sequence LTVLLGFGVFSIILLLPVAPF. The Cytoplasmic segment spans residues 720–727; sequence LHRITYHV. Residues 728 to 748 traverse the membrane as a helical segment; sequence TLFIFVIFVGTFIYNLAAPPF. Residues 749–969 are Vacuolar-facing; it reads SPNARLKVYF…LVEGSVPFMI (221 aa). Asparagine 840 carries N-linked (GlcNAc...) asparagine glycosylation.

The protein belongs to the peptidase M28 family. It depends on Zn(2+) as a cofactor.

The protein resides in the vacuole membrane. Functionally, may be involved in vacuolar sorting and osmoregulation. The protein is Vacuolar membrane protease of Tuber melanosporum (strain Mel28) (Perigord black truffle).